A 2549-amino-acid chain; its full sequence is Serine/threonine-protein kinase mTOR (2549 aa).

At Met-1 the chain carries N-acetylmethionine. The interaction with NBN stretch occupies residues 1-651 (MLGTGPATAT…HVVSQTAVQV (651 aa)). HEAT repeat units lie at residues 16–53 (SSNVSVLQQFASGLKSRNEETRAKAAKELQHYVTMELR), 55–99 (MSQE…VEGG), 100–137 (NSTRIGRFANYLRNLLPSSDPVVMEMASKAIGRLAMAG), 138–179 (DTFT…AISV), 180–220 (PTFF…LILT), 222–276 (QREP…RISS), 277–313 (MEGERLREEMEEITQQQLVHDKYCKDLMGFGTKPRHI), 314–364 (TPFT…CCRD), 365–409 (LMEE…AFTD), 410–445 (TQYLQDTMNHVLSCVKKEKERTAAFQALGLLSVAVR), 446–494 (SEFK…RAMG), 495–529 (PGIQQDIKELLEPMLAVGLSPALTAVLYDLSRQIP), 530–563 (QLKKDIQDGLLKMLSLVLMHKPLRHPGMPKGLAH), 564–596 (QLASPGLTTLPEASDVASITLALRTLGSFEFEG), 597–636 (HSLTQFVRHCADHFLNSEHKEIRMEAARTCSRLLTPSIHL), 637–683 (ISGH…DERF), 686–724 (HLAQAENLQALFVALNDQVFEIRELAICTVGRLSSMNPA), 727–766 (MPFLRKMLIQILTELEHSGIGRIKEQSARMLGHLVSNAPR), 769–811 (RPYM…VSGL), 814–853 (RKWVDELFVIIMDMLQDSSLLAKRQVALWTLGQLVASTGY), 857–893 (PYRKYPTLLEVLLNFLKTEQNQGTRREAIRVLGLLGA), 894–942 (LDPY…GNLP), 943–988 (LDEF…KCVQ), 989–1027 (FLPQVMPTFLNVIRVCDGAIREFLFQQLGMLVSFVKSHI), 1029–1068 (PYMDEIVTLMREFWVMNTSIQSTIILLIEQIVVALGGEFK), 1069–1105 (LYLPQLIPHMLRVFMHDNSQGRIVSIKLLAAIQLFGA), 1106–1144 (NLDDYLHLLLPPIVKLFDAPEVPLPSRKAALETVDRLTE), 1145–1188 (SLDF…GKKY), 1189–1225 (QIFIPMVNKVLVRHRINHQRYDVLICRIVKGYTLADE), 1226–1273 (EEDP…GAAR), 1274–1311 (RVSKDDWLEWLRRLSLELLKDSSSPSLRSCWALAQAYN), and 1312–1345 (PMARDLFNAAFVSCWSELNEDQQDELIRSIELAL). Ser-567 bears the Phosphoserine mark. Residue Thr-1162 is modified to Phosphothreonine. Residue Lys-1218 is modified to N6-acetyllysine. Ser-1261 carries the phosphoserine modification. TPR repeat units follow at residues 1346–1382 (TSQDIAEVTQTLLNLAEFMEHSDKGPLPLRDDNGIVL), 1383–1408 (LGERAAKCRAYAKALHYKELEFQKGP), 1409–1442 (TPAILESLISINNKLQQPEAASGVLEYAMKHFGE), 1443–1473 (LEIQATWYEKLHEWEDALVAYDKKMDTNKDD), 1474–1507 (PELMLGRMRCLEALGEWGQLHQQCCEKWTLVNDE), 1508–1541 (TQAKMARMAAAAAWGLGQWDSMEEYTCMIPRDTH), 1542–1574 (DGAFYRAVLALHQDLFSLAQQCIDKARDLLDAE), 1575–1614 (LTAMAGESYSRAYGAMVSCHMLSELEEVIQYKLVPERREI), 1615–1649 (IRQIWWERLQGCQRIVEDWQKILMVRSLVVSPHED), 1650–1693 (MRTW…PTVH), 1694–1731 (PQVTYAYMKNMWKSARKIDAFQHMQHFVQTMQQQAQHA), 1732–1786 (IATE…DRSW), 1787–1846 (YKAW…STEG), 1898–1930 (NNLQDTLRVLTLWFDYGHWPDVNEALVEGVKAI), 1931–1970 (QIDTWLQVIPQLIARIDTPRPLVGRLIHQLLTDIGRYHPQ), and 1971–2005 (ALIYPLTVASKSTTTARHNAANKILKNMCEHSNTL). One can recognise an FAT domain in the interval 1382–1982 (LLGERAAKCR…IYPLTVASKS (601 aa)). 1D-myo-inositol hexakisphosphate contacts are provided by Lys-1662, Lys-1702, and Arg-1749. A disordered region spans residues 1812-1867 (DEKKKLRHASGANITNATTTATTAASAAAATSTEGSNSESEAESNESSPTPSPLQK). Residues 1826–1860 (TNATTTATTAASAAAATSTEGSNSESEAESNESSP) show a composition bias toward low complexity. A sufficient for interaction with the FKBP1A/rapamycin complex region spans residues 2012 to 2144 (VSEELIRVAI…DLELAVPGTY (133 aa)). Lys-2066 participates in a covalent cross-link: Glycyl lysine isopeptide (Lys-Gly) (interchain with G-Cter in ubiquitin). One can recognise a PI3K/PI4K catalytic domain in the interval 2156–2469 (IAPSLQVITS…GVELGEPAHK (314 aa)). The residue at position 2159 (Ser-2159) is a Phosphoserine. A G-loop region spans residues 2162–2168 (VITSKQR). Thr-2164 carries the post-translational modification Phosphothreonine. ATP is bound by residues Ser-2165 and Gln-2167. Position 2173 is a phosphothreonine; by PKB/AKT1 (Thr-2173). Residues Leu-2185, Lys-2187, Glu-2190, Tyr-2225, Gly-2238, Trp-2239, Val-2240, and Thr-2245 each coordinate ATP. The segment at 2258–2296 (KILLNIEHRIMLRMAPDYDHLTLMQKVEVFEHAVNNTAG) is interaction with MLST8. Positions 2335–2343 (GLGDRHPSN) are catalytic loop. Residue Asn-2343 participates in Mg(2+) binding. ATP is bound by residues Met-2345 and Ile-2356. Residues 2355–2380 (HIDFGDCFEVAMTREKFPEKIPFRLT) are activation loop. Asp-2357 provides a ligand contact to Mg(2+). At Thr-2446 the chain carries Phosphothreonine; by RPS6KB1. Ser-2448 carries the post-translational modification Phosphoserine; by RPS6KB1. Phosphoserine is present on Ser-2478. Ser-2481 is subject to Phosphoserine; by autocatalysis. The FATC domain occupies 2517-2549 (DTLDVPTQVELLIKQATSHENLCQCYIGWCPFW).

The protein belongs to the PI3/PI4-kinase family. In terms of assembly, part of the mechanistic target of rapamycin complex 1 (mTORC1) which contains MTOR, MLST8 and RPTOR. The mTORC1 complex is a 1 Md obligate dimer of two stoichiometric heterotetramers with overall dimensions of 290 A x 210 A x 135 A. It has a rhomboid shape and a central cavity, the dimeric interfaces are formed by interlocking interactions between the two MTOR and the two RPTOR subunits. The MLST8 subunit forms distal foot-like protuberances, and contacts only one MTOR within the complex, while the small AKT1S1/PRAS40 localizes to the midsection of the central core, in close proximity to RPTOR. mTORC1 associates with AKT1S1/PRAS40, which inhibits its activity by blocking MTOR substrate-recruitment site. Component of the mechanistic target of rapamycin complex 2 (mTORC2), consisting in two heterotretramers composed of MTOR, MLST8, RICTOR and MAPKAP1/SIN1. Interacts with PLPP7 and PML. Interacts with PRR5 and RICTOR; the interaction is direct within the mTORC2 complex and interaction with RICTOR is enhanced by deubiquitination of RICTOR by USP9X. mTORC1 and mTORC2 associate with DEPTOR, which regulates their activity. Interacts with WAC; WAC positively regulates MTOR activity by promoting the assembly of the TTT complex composed of TELO2, TTI1 and TTI2 and the RUVBL complex composed of RUVBL1 and RUVBL2 into the TTT-RUVBL complex which leads to the dimerization of the mTORC1 complex and its subsequent activation. Interacts with UBQLN1. Interacts with TTI1 and TELO2. Interacts with CLIP1; phosphorylates and regulates CLIP1. Interacts with NBN. Interacts with HTR6. Interacts with BRAT1. Interacts with MEAK7 (via C-terminal domain); the interaction increases upon nutrient stimulation. Interacts with TM4SF5; the interaction is positively regulated by arginine and is negatively regulated by leucine. Interacts with GPR137B. Interacts with NCKAP1L. Interacts with TPCN1 and TPCN2; the interaction is required for TPCN1 and TPCN2 sensitivity to ATP. Interacts with ATP6V1A and with CRYAB, forming a ternary complex. Interacts with SLC38A7; this interaction mediates the recruitment of mTORC1 to the lysosome and its subsequent activation. Interacts with TSPAN8. Post-translationally, autophosphorylates when part of mTORC1 or mTORC2. Phosphorylation at Ser-1261, Ser-2159 and Thr-2164 promotes autophosphorylation. Phosphorylated at Ser-2448 by RPS6KB1. Phosphorylation in the kinase domain modulates the interactions of MTOR with RPTOR and AKT1S1/PRAS40 and leads to increased intrinsic mTORC1 kinase activity. Phosphorylation at Ser-2159 by TBK1 in response to growth factors and pathogen recognition receptors promotes mTORC1 activity. Phosphorylation at Ser-2159 by TBK1 in response to EGF growth factor promotes mTORC2 activity, leading to AKT1 phosphorylation and activation. Phosphorylation at Thr-2173 in the ATP-binding region by AKT1 strongly reduces kinase activity. In terms of processing, ubiquitinated at Lys-2066 by the SCF(FBXO22) complex via 'Lys-27'-linked ubiquitination prevents mTORC1 substrate recruitment.

It localises to the lysosome membrane. It is found in the endoplasmic reticulum membrane. The protein resides in the golgi apparatus membrane. Its subcellular location is the cell membrane. The protein localises to the mitochondrion outer membrane. It localises to the cytoplasm. It is found in the nucleus. The protein resides in the PML body. Its subcellular location is the microsome membrane. The protein localises to the cytoplasmic vesicle. It localises to the phagosome. The catalysed reaction is L-seryl-[protein] + ATP = O-phospho-L-seryl-[protein] + ADP + H(+). It catalyses the reaction L-threonyl-[protein] + ATP = O-phospho-L-threonyl-[protein] + ADP + H(+). It carries out the reaction L-tyrosyl-[protein] + ATP = O-phospho-L-tyrosyl-[protein] + ADP + H(+). Its activity is regulated as follows. The mTORC1 complex is activated in response to nutrients, growth factors or amino acids: activation requires relocalization of the mTORC1 complex to lysosomes that is mediated by the Ragulator complex, SLC38A9, and the Rag GTPases RagA/RRAGA, RagB/RRAGB, RagC/RRAGC and RagD/RRAGD. Activation of mTORC1 by growth factors such as insulin involves AKT1-mediated phosphorylation of TSC1-TSC2, which leads to the activation of the RHEB GTPase a potent activator of the protein kinase activity of mTORC1. Insulin-stimulated and amino acid-dependent phosphorylation at Ser-1261 promotes autophosphorylation and the activation of mTORC1. On the other hand, low cellular energy levels can inhibit mTORC1 through activation of PRKAA1 while hypoxia inhibits mTORC1 through a REDD1-dependent mechanism which may also require PRKAA1. The kinase activity of MTOR within the mTORC1 complex is positively regulated by MLST8. The kinase activity of MTOR is inhibited by DEPTOR and AKT1S1. The non-canonical mTORC1 complex is independent of the RHEB GTPase and specifically mediates phosphorylation of MiT/TFE factors TFEB and TFE3 but not other mTORC1 substrates: it is activated by FLCN, which activates Rag GTPases RagC/RRAGC and RagD/RRAGD. MTOR is the target of the immunosuppressive and anti-cancer drug rapamycin which acts in complex with FKBP1A/FKBP12, and specifically inhibits its kinase activity. mTORC2 is also activated by growth factors, but seems to be nutrient-insensitive. mTORC2 associates and is directly activated by ribosomes. mTORC2 may also be regulated by RHEB but in an indirect manner through the PI3K signaling pathway. In terms of biological role, serine/threonine protein kinase which is a central regulator of cellular metabolism, growth and survival in response to hormones, growth factors, nutrients, energy and stress signals. MTOR directly or indirectly regulates the phosphorylation of at least 800 proteins. Functions as part of 2 structurally and functionally distinct signaling complexes mTORC1 and mTORC2 (mTOR complex 1 and 2). In response to nutrients, growth factors or amino acids, mTORC1 is recruited to the lysosome membrane and promotes protein, lipid and nucleotide synthesis by phosphorylating key regulators of mRNA translation and ribosome synthesis. This includes phosphorylation of EIF4EBP1 and release of its inhibition toward the elongation initiation factor 4E (eiF4E). Moreover, phosphorylates and activates RPS6KB1 and RPS6KB2 that promote protein synthesis by modulating the activity of their downstream targets including ribosomal protein S6, eukaryotic translation initiation factor EIF4B, and the inhibitor of translation initiation PDCD4. Stimulates the pyrimidine biosynthesis pathway, both by acute regulation through RPS6KB1-mediated phosphorylation of the biosynthetic enzyme CAD, and delayed regulation, through transcriptional enhancement of the pentose phosphate pathway which produces 5-phosphoribosyl-1-pyrophosphate (PRPP), an allosteric activator of CAD at a later step in synthesis, this function is dependent on the mTORC1 complex. Regulates ribosome synthesis by activating RNA polymerase III-dependent transcription through phosphorylation and inhibition of MAF1 an RNA polymerase III-repressor. Activates dormant ribosomes by mediating phosphorylation of SERBP1, leading to SERBP1 inactivation and reactivation of translation. In parallel to protein synthesis, also regulates lipid synthesis through SREBF1/SREBP1 and LPIN1. To maintain energy homeostasis mTORC1 may also regulate mitochondrial biogenesis through regulation of PPARGC1A. In the same time, mTORC1 inhibits catabolic pathways: negatively regulates autophagy through phosphorylation of ULK1. Under nutrient sufficiency, phosphorylates ULK1 at 'Ser-758', disrupting the interaction with AMPK and preventing activation of ULK1. Also prevents autophagy through phosphorylation of the autophagy inhibitor DAP. Also prevents autophagy by phosphorylating RUBCNL/Pacer under nutrient-rich conditions. Prevents autophagy by mediating phosphorylation of AMBRA1, thereby inhibiting AMBRA1 ability to mediate ubiquitination of ULK1 and interaction between AMBRA1 and PPP2CA. mTORC1 exerts a feedback control on upstream growth factor signaling that includes phosphorylation and activation of GRB10 a INSR-dependent signaling suppressor. Among other potential targets mTORC1 may phosphorylate CLIP1 and regulate microtubules. The mTORC1 complex is inhibited in response to starvation and amino acid depletion. The non-canonical mTORC1 complex, which acts independently of RHEB, specifically mediates phosphorylation of MiT/TFE factors TFEB and TFE3 in the presence of nutrients, promoting their cytosolic retention and inactivation. Upon starvation or lysosomal stress, inhibition of mTORC1 induces dephosphorylation and nuclear translocation of TFEB and TFE3, promoting their transcription factor activity. The mTORC1 complex regulates pyroptosis in macrophages by promoting GSDMD oligomerization. MTOR phosphorylates RPTOR which in turn inhibits mTORC1. As part of the mTORC2 complex, MTOR transduces signals from growth factors to pathways involved in proliferation, cytoskeletal organization, lipogenesis and anabolic output. In response to growth factors, mTORC2 phosphorylates and activates AGC protein kinase family members, including AKT (AKT1, AKT2 and AKT3), PKC (PRKCA, PRKCB and PRKCE) and SGK1. In contrast to mTORC1, mTORC2 is nutrient-insensitive. mTORC2 plays a critical role in AKT1 activation by mediating phosphorylation of different sites depending on the context, such as 'Thr-450', 'Ser-473', 'Ser-477' or 'Thr-479', facilitating the phosphorylation of the activation loop of AKT1 on 'Thr-308' by PDPK1/PDK1 which is a prerequisite for full activation. mTORC2 also regulates the phosphorylation of SGK1 at 'Ser-422'. mTORC2 may regulate the actin cytoskeleton, through phosphorylation of PRKCA, PXN and activation of the Rho-type guanine nucleotide exchange factors RHOA and RAC1A or RAC1B. The mTORC2 complex also phosphorylates various proteins involved in insulin signaling, such as FBXW8 and IGF2BP1. May also regulate insulin signaling by acting as a tyrosine protein kinase that catalyzes phosphorylation of IGF1R and INSR. Regulates osteoclastogenesis by adjusting the expression of CEBPB isoforms. Plays an important regulatory role in the circadian clock function; regulates period length and rhythm amplitude of the suprachiasmatic nucleus (SCN) and liver clocks. The protein is Serine/threonine-protein kinase mTOR of Rattus norvegicus (Rat).